The following is a 188-amino-acid chain: Probable nicotinate-nucleotide adenylyltransferase (188 aa).

This sequence belongs to the NadD family.

It catalyses the reaction nicotinate beta-D-ribonucleotide + ATP + H(+) = deamido-NAD(+) + diphosphate. It functions in the pathway cofactor biosynthesis; NAD(+) biosynthesis; deamido-NAD(+) from nicotinate D-ribonucleotide: step 1/1. Functionally, catalyzes the reversible adenylation of nicotinate mononucleotide (NaMN) to nicotinic acid adenine dinucleotide (NaAD). The sequence is that of Probable nicotinate-nucleotide adenylyltransferase from Solibacter usitatus (strain Ellin6076).